The sequence spans 136 residues: Large ribosomal subunit protein uL16 (136 aa).

The protein belongs to the universal ribosomal protein uL16 family. Part of the 50S ribosomal subunit.

In terms of biological role, binds 23S rRNA and is also seen to make contacts with the A and possibly P site tRNAs. This is Large ribosomal subunit protein uL16 from Orientia tsutsugamushi (strain Ikeda) (Rickettsia tsutsugamushi).